A 253-amino-acid chain; its full sequence is Rab GTPase-activating protein 1-like, isoform 10 (253 aa).

The stretch at 8 to 222 forms a coiled coil; sequence SMTFEERENR…MNEIQAAKNS (215 aa). The disordered stretch occupies residues 233 to 253; sequence TATGTQPLQPAPVTQPPKEST.

The polypeptide is Rab GTPase-activating protein 1-like, isoform 10 (RABGAP1L) (Homo sapiens (Human)).